Reading from the N-terminus, the 275-residue chain is MASPLKILISNDDGVFAEGIKALAHEAARRGHSVTVVCPDQERSATGHGLTLQSPIRAEQADGLFADGIRAWACTGTPSDCVKLALGKLLEAPPDLVLSGINHGPNLGSDVIYSGTVAAAMEGTLEGLPALAVSSACFDWRQFDGAAVQAMDVAESALAGGWPEGLLLNLNVPAVPPDRIGPVRWCRPGVRRYVDQFDERFDPRGRSYYWLAGEVVNDFEAAGTGPKDWPTDVAQVQGGGVALTPLQPELFWRGALPPLPIAGVSAAPDAAAARG.

Residues aspartate 12, aspartate 13, serine 44, and asparagine 102 each contribute to the a divalent metal cation site.

Belongs to the SurE nucleotidase family. A divalent metal cation serves as cofactor.

The protein localises to the cytoplasm. It catalyses the reaction a ribonucleoside 5'-phosphate + H2O = a ribonucleoside + phosphate. Nucleotidase that shows phosphatase activity on nucleoside 5'-monophosphates. The sequence is that of 5'-nucleotidase SurE from Synechococcus sp. (strain RCC307).